Reading from the N-terminus, the 118-residue chain is Large ribosomal subunit protein uL18 (118 aa).

This sequence belongs to the universal ribosomal protein uL18 family. As to quaternary structure, part of the 50S ribosomal subunit; part of the 5S rRNA/L5/L18/L25 subcomplex. Contacts the 5S and 23S rRNAs.

Its function is as follows. This is one of the proteins that bind and probably mediate the attachment of the 5S RNA into the large ribosomal subunit, where it forms part of the central protuberance. The polypeptide is Large ribosomal subunit protein uL18 (Helicobacter pylori (strain J99 / ATCC 700824) (Campylobacter pylori J99)).